Here is a 212-residue protein sequence, read N- to C-terminus: Thiamine-phosphate synthase (212 aa).

Residue 38–42 (QLREK) participates in 4-amino-2-methyl-5-(diphosphooxymethyl)pyrimidine binding. Mg(2+) contacts are provided by aspartate 71 and aspartate 90. Residue lysine 138 participates in 4-amino-2-methyl-5-(diphosphooxymethyl)pyrimidine binding. Glycine 166 is a binding site for 2-[(2R,5Z)-2-carboxy-4-methylthiazol-5(2H)-ylidene]ethyl phosphate.

The protein belongs to the thiamine-phosphate synthase family. Requires Mg(2+) as cofactor.

The enzyme catalyses 2-[(2R,5Z)-2-carboxy-4-methylthiazol-5(2H)-ylidene]ethyl phosphate + 4-amino-2-methyl-5-(diphosphooxymethyl)pyrimidine + 2 H(+) = thiamine phosphate + CO2 + diphosphate. The catalysed reaction is 2-(2-carboxy-4-methylthiazol-5-yl)ethyl phosphate + 4-amino-2-methyl-5-(diphosphooxymethyl)pyrimidine + 2 H(+) = thiamine phosphate + CO2 + diphosphate. It catalyses the reaction 4-methyl-5-(2-phosphooxyethyl)-thiazole + 4-amino-2-methyl-5-(diphosphooxymethyl)pyrimidine + H(+) = thiamine phosphate + diphosphate. It functions in the pathway cofactor biosynthesis; thiamine diphosphate biosynthesis; thiamine phosphate from 4-amino-2-methyl-5-diphosphomethylpyrimidine and 4-methyl-5-(2-phosphoethyl)-thiazole: step 1/1. In terms of biological role, condenses 4-methyl-5-(beta-hydroxyethyl)thiazole monophosphate (THZ-P) and 2-methyl-4-amino-5-hydroxymethyl pyrimidine pyrophosphate (HMP-PP) to form thiamine monophosphate (TMP). This chain is Thiamine-phosphate synthase, found in Chlamydia caviae (strain ATCC VR-813 / DSM 19441 / 03DC25 / GPIC) (Chlamydophila caviae).